Here is a 772-residue protein sequence, read N- to C-terminus: Probable beta-glucosidase M (772 aa).

An N-terminal signal peptide occupies residues 1–20 (MLTSWGKTGFVLALALGGRA). N-linked (GlcNAc...) asparagine glycosylation is present at asparagine 259. The active site involves aspartate 287. N-linked (GlcNAc...) asparagine glycosylation is found at asparagine 315, asparagine 322, asparagine 438, asparagine 523, asparagine 547, asparagine 574, and asparagine 586.

It belongs to the glycosyl hydrolase 3 family.

The protein localises to the secreted. It catalyses the reaction Hydrolysis of terminal, non-reducing beta-D-glucosyl residues with release of beta-D-glucose.. Its pathway is glycan metabolism; cellulose degradation. In terms of biological role, beta-glucosidases are one of a number of cellulolytic enzymes involved in the degradation of cellulosic biomass. Catalyzes the last step releasing glucose from the inhibitory cellobiose. This chain is Probable beta-glucosidase M (bglM), found in Emericella nidulans (strain FGSC A4 / ATCC 38163 / CBS 112.46 / NRRL 194 / M139) (Aspergillus nidulans).